We begin with the raw amino-acid sequence, 229 residues long: UPF0500 protein C1orf216 (229 aa).

Positions 1–144 (MFAIQPGLAE…RGPGPPDPLL (144 aa)) are disordered. A compositionally biased stretch (polar residues) spans 62-71 (SESPSDNQAF). Low complexity-rich tracts occupy residues 84–93 (PPEGAEIPGA) and 115–126 (SSSLSIDSRSSS).

This sequence belongs to the UPF0500 family.

The protein is UPF0500 protein C1orf216 (C1orf216) of Homo sapiens (Human).